Reading from the N-terminus, the 691-residue chain is Lacticin-481/lactococcin-DR transport/processing ATP-binding protein lcnDR3 (691 aa).

In terms of domain architecture, Peptidase C39 spans 6-130 (QNNEQDCLLA…KKFSGYIITL (125 aa)). Residue Cys-12 is part of the active site. Residues 158–434 (TFLYIFSLFI…IQDVMFEISR (277 aa)) form the ABC transmembrane type-1 domain. 5 helical membrane passes run 159–179 (FLYIFSLFISQIVALWFSIIL), 189–209 (ITYSFIMMISLVLFQTLSLLM), 262–284 (GILLKIFPSLLNFFTVFIVIIYL), 289–311 (FTLTLFLVIMNLLYMIFSFSLIS), and 385–405 (ICVILMMIFGIYLNQGNLVSI). Positions 464 to 689 (IILKDISYSY…LLNDSYNSFV (226 aa)) constitute an ABC transporter domain. 497–504 (GKSGSGKS) provides a ligand contact to ATP.

This sequence belongs to the ABC transporter superfamily.

The protein resides in the cell membrane. Functionally, probably implicated in the export process of the lantibiotic lacticin-481/lactococcin-DR. This is Lacticin-481/lactococcin-DR transport/processing ATP-binding protein lcnDR3 (lcnDR3) from Lactococcus lactis subsp. lactis (Streptococcus lactis).